We begin with the raw amino-acid sequence, 438 residues long: Glutamyl-tRNA(Gln) amidotransferase subunit D (438 aa).

An Asparaginase/glutaminase domain is found at 92-422 (PEVTIIGTGG…EEVRKMMLTN (331 aa)). Residues Thr-102, Thr-178, Asp-179, and Lys-256 contribute to the active site.

It belongs to the asparaginase 1 family. GatD subfamily. As to quaternary structure, heterodimer of GatD and GatE.

It catalyses the reaction L-glutamyl-tRNA(Gln) + L-glutamine + ATP + H2O = L-glutaminyl-tRNA(Gln) + L-glutamate + ADP + phosphate + H(+). In terms of biological role, allows the formation of correctly charged Gln-tRNA(Gln) through the transamidation of misacylated Glu-tRNA(Gln) in organisms which lack glutaminyl-tRNA synthetase. The reaction takes place in the presence of glutamine and ATP through an activated gamma-phospho-Glu-tRNA(Gln). The GatDE system is specific for glutamate and does not act on aspartate. This Pyrococcus abyssi (strain GE5 / Orsay) protein is Glutamyl-tRNA(Gln) amidotransferase subunit D.